The following is a 155-amino-acid chain: Ribosomal RNA large subunit methyltransferase H (155 aa).

S-adenosyl-L-methionine-binding positions include leucine 73, glycine 104, and 123–128 (LSPLTL).

It belongs to the RNA methyltransferase RlmH family. Homodimer.

It is found in the cytoplasm. It catalyses the reaction pseudouridine(1915) in 23S rRNA + S-adenosyl-L-methionine = N(3)-methylpseudouridine(1915) in 23S rRNA + S-adenosyl-L-homocysteine + H(+). Its function is as follows. Specifically methylates the pseudouridine at position 1915 (m3Psi1915) in 23S rRNA. The sequence is that of Ribosomal RNA large subunit methyltransferase H from Pseudomonas fluorescens (strain ATCC BAA-477 / NRRL B-23932 / Pf-5).